The sequence spans 156 residues: Transcriptional repressor NrdR (156 aa).

The segment at 3-34 (CPFCHSDNDKVQDSRTAEAGYVVRRKRLCQTC) is a zinc-finger region. The 91-residue stretch at 49 to 139 (VRVVKSDETR…VYRDFDDAKD (91 aa)) folds into the ATP-cone domain.

Belongs to the NrdR family. Zn(2+) serves as cofactor.

Its function is as follows. Negatively regulates transcription of bacterial ribonucleotide reductase nrd genes and operons by binding to NrdR-boxes. This chain is Transcriptional repressor NrdR, found in Rhodopirellula baltica (strain DSM 10527 / NCIMB 13988 / SH1).